The chain runs to 500 residues: Cytochrome P450 71B37 (500 aa).

A helical membrane pass occupies residues 2–22 (ATIWFLPLLFLSCLLLAALRL). Cys-440 contacts heme.

The protein belongs to the cytochrome P450 family. Requires heme as cofactor.

It localises to the membrane. This Arabidopsis thaliana (Mouse-ear cress) protein is Cytochrome P450 71B37 (CYP71B37).